The sequence spans 457 residues: UDP-glycosyltransferase 72C1 (457 aa).

Residues Ser272, 343–344 (WA), 361–369 (HCGWNSVLE), and 383–386 (YSEQ) contribute to the UDP-alpha-D-glucose site.

This sequence belongs to the UDP-glycosyltransferase family.

In Arabidopsis thaliana (Mouse-ear cress), this protein is UDP-glycosyltransferase 72C1 (UGT72C1).